Consider the following 799-residue polypeptide: Histidine biosynthesis trifunctional protein (799 aa).

The interval 1–229 is phosphoribosyl-AMP cyclohydrolase; it reads MVLPILPLID…FIVEQENVGF (229 aa). Positions 230 to 312 are phosphoribosyl-ATP pyrophosphohydrolase; sequence CHLETMSCFG…FYFALAKLVA (83 aa). The segment at 313–799 is histidinol dehydrogenase; it reads NDVSLKDVEN…KLGLIPKDFQ (487 aa). Zn(2+) is bound by residues Q618 and H621. Residues E687 and H688 contribute to the active site. Zn(2+) is bound by residues D721 and H780.

In the C-terminal section; belongs to the histidinol dehydrogenase family. The cofactor is Zn(2+).

It catalyses the reaction 1-(5-phospho-beta-D-ribosyl)-5'-AMP + H2O = 1-(5-phospho-beta-D-ribosyl)-5-[(5-phospho-beta-D-ribosylamino)methylideneamino]imidazole-4-carboxamide. The enzyme catalyses 1-(5-phospho-beta-D-ribosyl)-ATP + H2O = 1-(5-phospho-beta-D-ribosyl)-5'-AMP + diphosphate + H(+). It carries out the reaction L-histidinol + 2 NAD(+) + H2O = L-histidine + 2 NADH + 3 H(+). Its pathway is amino-acid biosynthesis; L-histidine biosynthesis; L-histidine from 5-phospho-alpha-D-ribose 1-diphosphate: step 2/9. The protein operates within amino-acid biosynthesis; L-histidine biosynthesis; L-histidine from 5-phospho-alpha-D-ribose 1-diphosphate: step 3/9. It functions in the pathway amino-acid biosynthesis; L-histidine biosynthesis; L-histidine from 5-phospho-alpha-D-ribose 1-diphosphate: step 9/9. The chain is Histidine biosynthesis trifunctional protein from Saccharomyces cerevisiae (strain ATCC 204508 / S288c) (Baker's yeast).